The sequence spans 527 residues: N-acetylglutamate synthase, mitochondrial (527 aa).

The transit peptide at 1 to 18 (MATAWVATALRSAAAARR) directs the protein to the mitochondrion. Residues 14-91 (AAARRLRSPG…PLESPAPPAG (78 aa)) are disordered. An amino-acid kinase domain (AAK) region spans residues 19 to 369 (LRSPGGPGGS…CGTLFKNAER (351 aa)). Positions 54–63 (AHAEDAEGAK) are enriched in basic and acidic residues. Pro residues predominate over residues 77-89 (TPLPTPLESPAPP). Residues 368–519 (ERMLRVRNLD…HAKGLPDSFC (152 aa)) form the N-acetyltransferase domain. Substrate is bound by residues lysine 394, lysine 437, and 467-472 (RSRVTN).

The protein belongs to the acetyltransferase family. In terms of assembly, homodimer. Homotetramer. Post-translationally, probably processed by mitochondrial processing peptidase (MPP). The long form has not yet been isolated. Highly expressed in the liver and small intestine. Weakly expressed in the kidney, spleen and testis.

The protein resides in the mitochondrion matrix. The enzyme catalyses L-glutamate + acetyl-CoA = N-acetyl-L-glutamate + CoA + H(+). Its pathway is amino-acid biosynthesis; L-arginine biosynthesis; N(2)-acetyl-L-ornithine from L-glutamate: step 1/4. Increased by L-arginine. Plays a role in the regulation of ureagenesis by producing the essential cofactor N-acetylglutamate (NAG), thus modulating carbamoylphosphate synthase I (CPS1) activity. This is N-acetylglutamate synthase, mitochondrial (Nags) from Mus musculus (Mouse).